Consider the following 387-residue polypeptide: EP300-interacting inhibitor of differentiation 3 (387 aa).

The span at 1–19 (MSEEKCSLTGGEEKGEELA) shows a compositional bias: basic and acidic residues. The disordered stretch occupies residues 1–77 (MSEEKCSLTG…SDDLSPEAPC (77 aa)). Over residues 32 to 72 (EEDDDDDEEALKKEEEEEEEEEEEDEEEEEEGPDSSSDDLS) the composition is skewed to acidic residues.

The protein belongs to the NSE4 family. In terms of assembly, component of the SMC5-SMC6 complex which consists at least of SMC5, SMC6, NSMCE2, NSMCE1, NSMCE4A or EID3 and NSMCE3. NSMCE1, NSMCE4A or EID3 and NSMCE3 probably form a subcomplex that bridges the head domains of the SMC5:SMC6 heterodimer. Homodimer, and heterodimer with EID2. Interacts with the C-terminal region of CREBBP.

The protein resides in the nucleus. It localises to the cytoplasm. Its subcellular location is the chromosome. It is found in the telomere. Functionally, tissue-specific component of the SMC5-SMC6 complex, a complex involved in repair of DNA double-strand breaks by homologous recombination. The complex may promote sister chromatid homologous recombination by recruiting the SMC1-SMC3 cohesin complex to double-strand breaks. The complex is required for telomere maintenance via recombination and mediates sumoylation of shelterin complex (telosome) components. Its function is as follows. Acts as a repressor of nuclear receptor-dependent transcription possibly by interfering with CREBBP-dependent coactivation. May function as a coinhibitor of other CREBBP/EP300-dependent transcription factors. The sequence is that of EP300-interacting inhibitor of differentiation 3 from Rattus norvegicus (Rat).